The following is a 353-amino-acid chain: Guanine nucleotide-binding protein alpha-3 subunit (353 aa).

Gly2 is lipidated: N-myristoyl glycine. Cys4 carries the S-palmitoyl cysteine lipid modification. The G-alpha domain occupies 32–353 (KVVKLLLLGA…IQANLQGCGL (322 aa)). Residues 35 to 48 (KLLLLGAGECGKST) are G1 motif. Residues 40–47 (GAGECGKS), 176–182 (LLSRIKT), 201–205 (DVGGQ), 270–273 (NKKD), and Ala326 contribute to the GTP site. 2 residues coordinate Mg(2+): Ser47 and Thr182. The segment at 174–182 (DILLSRIKT) is G2 motif. The interval 197 to 206 (FRVFDVGGQR) is G3 motif. The tract at residues 266-273 (ILFLNKKD) is G4 motif. A G5 motif region spans residues 324 to 329 (TCATDT).

Belongs to the G-alpha family. G(q) subfamily. G proteins are composed of 3 units; alpha, beta and gamma. The alpha chain contains the guanine nucleotide binding site.

Its function is as follows. Guanine nucleotide-binding proteins (G proteins) are involved as modulators or transducers in various transmembrane signaling systems. Promotes transcription of 3',5'-cyclic phosphodiesterases pde-1 and pde-5, leading to reduced cGMP levels in sensory neurons. This causes suppression of insulin production and signaling which leads to increased daf-16 activity and contributes to increased adult lifespan and resistance to oxidative stress. In addition, by reducing cGMP levels, inhibits TGF-beta signaling pathways. Involved in behavioral response to P.aeruginosa by controlling the expression of daf-7, a member of the TGF-beta family, in ASJ sensory neurons. Plays a role in the avoidance response to the noxious chemical quinine in ASH sensory neurons. This Caenorhabditis elegans protein is Guanine nucleotide-binding protein alpha-3 subunit.